The following is a 1069-amino-acid chain: Enteropeptidase (1069 aa).

The Cytoplasmic portion of the chain corresponds to 1 to 18 (MKSSRDEAVGHHSISSFE). Residues 19–47 (VMLSALFIMLMVFSIGLIAVSWLAVKESE) form a helical; Signal-anchor for type II membrane protein membrane-spanning segment. Residues 48–1069 (GDAALGKSHE…FIEWIHSFLH (1022 aa)) are Extracellular-facing. The region spanning 54-169 (KSHEVRGTFK…NSIDITASLS (116 aa)) is the SEA domain. Asn-147, Asn-197, and Asn-212 each carry an N-linked (GlcNAc...) asparagine glycan. In terms of domain architecture, LDL-receptor class A 1 spans 227–268 (IECQPGSRPCAHAWNCVATDLFCDGEVNCPDGSDEDTGLCAT). Intrachain disulfides connect Cys-229–Cys-242, Cys-236–Cys-255, Cys-249–Cys-266, and Cys-270–Cys-298. One can recognise a CUB 1 domain in the interval 270-379 (CDGRFLLTGD…IGFNATYSTF (110 aa)). Residues Asn-373, Asn-380, Asn-433, Asn-515, Asn-579, and Asn-675 are each glycosylated (N-linked (GlcNAc...) asparagine). Residues 387-549 (YEKIDCTFDD…ISLTNGICSQ (163 aa)) form the MAM domain. Cys-569 and Cys-597 are joined by a disulfide. Positions 569–679 (CGGPFELWEP…KGFKANFTSG (111 aa)) constitute a CUB 2 domain. The LDL-receptor class A 2 domain occupies 686-724 (EPCQDDEFQCKDGNCIPLGNLCDSYPHCRDGSDEASCVR). Intrachain disulfides connect Cys-688/Cys-700, Cys-695/Cys-713, and Cys-707/Cys-722. The region spanning 723-816 (VRFLNGTRSN…LILLQCNHKS (94 aa)) is the SRCR domain. Asn-727, Asn-751, Asn-770, and Asn-791 each carry an N-linked (GlcNAc...) asparagine glycan. 6 cysteine pairs are disulfide-bonded: Cys-802–Cys-812, Cys-817–Cys-945, Cys-859–Cys-875, Cys-959–Cys-1027, Cys-991–Cys-1006, and Cys-1017–Cys-1045. Positions 830 to 1069 (IVGGSDAQAG…FIEWIHSFLH (240 aa)) constitute a Peptidase S1 domain. His-874 serves as the catalytic Charge relay system. N-linked (GlcNAc...) asparagine glycosylation occurs at Asn-897. Asp-925 (charge relay system) is an active-site residue. 2 N-linked (GlcNAc...) asparagine glycosylation sites follow: Asn-936 and Asn-999. Residue Ser-1021 is the Charge relay system of the active site.

This sequence belongs to the peptidase S1 family. Heterodimer of a catalytic (light) chain and a multidomain (heavy) chain linked by a disulfide bond. The chains are derived from a single precursor that is cleaved by a trypsin-like protease.

It is found in the membrane. It catalyses the reaction Activation of trypsinogen by selective cleavage of 6-Lys-|-Ile-7 bond.. In terms of biological role, responsible for initiating activation of pancreatic proteolytic proenzymes (trypsin, chymotrypsin and carboxypeptidase A). It catalyzes the conversion of trypsinogen to trypsin which in turn activates other proenzymes including chymotrypsinogen, procarboxypeptidases, and proelastases. In Mus musculus (Mouse), this protein is Enteropeptidase (Tmprss15).